We begin with the raw amino-acid sequence, 269 residues long: 4-hydroxy-tetrahydrodipicolinate reductase (269 aa).

NAD(+) is bound by residues 11-16 and glutamate 37; that span reads GGSGRM. NADP(+) is bound at residue arginine 38. NAD(+) contacts are provided by residues 101 to 103 and 125 to 128; these read GTT and AGNM. Histidine 158 serves as the catalytic Proton donor/acceptor. Histidine 159 is a (S)-2,3,4,5-tetrahydrodipicolinate binding site. Lysine 162 acts as the Proton donor in catalysis. Residue 168-169 coordinates (S)-2,3,4,5-tetrahydrodipicolinate; sequence GT.

The protein belongs to the DapB family.

It localises to the cytoplasm. The catalysed reaction is (S)-2,3,4,5-tetrahydrodipicolinate + NAD(+) + H2O = (2S,4S)-4-hydroxy-2,3,4,5-tetrahydrodipicolinate + NADH + H(+). The enzyme catalyses (S)-2,3,4,5-tetrahydrodipicolinate + NADP(+) + H2O = (2S,4S)-4-hydroxy-2,3,4,5-tetrahydrodipicolinate + NADPH + H(+). It functions in the pathway amino-acid biosynthesis; L-lysine biosynthesis via DAP pathway; (S)-tetrahydrodipicolinate from L-aspartate: step 4/4. Catalyzes the conversion of 4-hydroxy-tetrahydrodipicolinate (HTPA) to tetrahydrodipicolinate. The polypeptide is 4-hydroxy-tetrahydrodipicolinate reductase (Dinoroseobacter shibae (strain DSM 16493 / NCIMB 14021 / DFL 12)).